Consider the following 520-residue polypeptide: Cytochrome P450 4F3 (520 aa).

Residues 11–31 (LWPMAASPWLLLLLVGASWLL) form a helical membrane-spanning segment. Glu328 and Cys468 together coordinate heme.

It belongs to the cytochrome P450 family. Heme is required as a cofactor. As to expression, selectively expressed in blood neutrophils and bone marrow cells. Coexpressed with CYP4F3B in prostate, ileum and trachea. Selectively expressed in liver and kidney. It is also the predominant CYP4F isoform in trachea and tissues of the gastrointestinal tract.

The protein resides in the endoplasmic reticulum membrane. The protein localises to the microsome membrane. It carries out the reaction an organic molecule + reduced [NADPH--hemoprotein reductase] + O2 = an alcohol + oxidized [NADPH--hemoprotein reductase] + H2O + H(+). The enzyme catalyses leukotriene B4 + reduced [NADPH--hemoprotein reductase] + O2 = 20-hydroxy-leukotriene B4 + oxidized [NADPH--hemoprotein reductase] + H2O + H(+). It catalyses the reaction 20-hydroxy-leukotriene B4 + reduced [NADPH--hemoprotein reductase] + O2 = 20-oxo-leukotriene B4 + oxidized [NADPH--hemoprotein reductase] + 2 H2O + H(+). The catalysed reaction is 20-oxo-leukotriene B4 + reduced [NADPH--hemoprotein reductase] + O2 = 20-carboxy-leukotriene B4 + oxidized [NADPH--hemoprotein reductase] + H2O + 2 H(+). It carries out the reaction (5Z,8Z,11Z)-eicosatrienoate + reduced [NADPH--hemoprotein reductase] + O2 = 20-hydroxy-(5Z,8Z,11Z)-eicosatrienoate + oxidized [NADPH--hemoprotein reductase] + H2O + H(+). The enzyme catalyses (5Z,8Z,11Z,14Z)-eicosatetraenoate + reduced [NADPH--hemoprotein reductase] + O2 = 20-hydroxy-(5Z,8Z,11Z,14Z)-eicosatetraenoate + oxidized [NADPH--hemoprotein reductase] + H2O + H(+). It catalyses the reaction (5Z,8Z,11Z,14Z,17Z)-eicosapentaenoate + reduced [NADPH--hemoprotein reductase] + O2 = 19-hydroxy-(5Z,8Z,11Z,14Z,17Z)-eicosapentaenoate + oxidized [NADPH--hemoprotein reductase] + H2O + H(+). The catalysed reaction is (5Z,8Z,11Z,14Z,17Z)-eicosapentaenoate + reduced [NADPH--hemoprotein reductase] + O2 = 20-hydroxy-(5Z,8Z,11Z,14Z,17Z)-eicosapentaenoate + oxidized [NADPH--hemoprotein reductase] + H2O + H(+). It carries out the reaction (4Z,7Z,10Z,13Z,16Z,19Z)-docosahexaenoate + reduced [NADPH--hemoprotein reductase] + O2 = 21-hydroxy-(4Z,7Z,10Z,13Z,16Z,19Z)-docosahexaenoate + oxidized [NADPH--hemoprotein reductase] + H2O + H(+). The enzyme catalyses (4Z,7Z,10Z,13Z,16Z,19Z)-docosahexaenoate + reduced [NADPH--hemoprotein reductase] + O2 = 22-hydroxy-(4Z,7Z,10Z,13Z,16Z,19Z)-docosahexaenoate + oxidized [NADPH--hemoprotein reductase] + H2O + H(+). It catalyses the reaction 8,9-epoxy-(5Z,11Z,14Z)-eicosatrienoate + reduced [NADPH--hemoprotein reductase] + O2 = 20-hydroxy-8,9-epoxy-(5Z,11Z,14Z)-eicosatrienoate + oxidized [NADPH--hemoprotein reductase] + H2O + H(+). The catalysed reaction is 11,12-epoxy-(5Z,8Z,14Z)-eicosatrienoate + reduced [NADPH--hemoprotein reductase] + O2 = 20-hydroxy-11,12-epoxy-(5Z,8Z,14Z)-eicosatrienoate + oxidized [NADPH--hemoprotein reductase] + H2O + H(+). It carries out the reaction 14,15-epoxy-(5Z,8Z,11Z)-eicosatrienoate + reduced [NADPH--hemoprotein reductase] + O2 = 20-hydroxy-14,15-epoxy-(5Z,8Z,11Z)-eicosatrienoate + oxidized [NADPH--hemoprotein reductase] + H2O + H(+). The enzyme catalyses 12,13-epoxy-(9Z)-octadecenoate + reduced [NADPH--hemoprotein reductase] + O2 = 18-hydroxy-12,13-epoxy-(9Z)-octadecenoate + oxidized [NADPH--hemoprotein reductase] + H2O + H(+). It catalyses the reaction 9,10-epoxy-(12Z)-octadecenoate + reduced [NADPH--hemoprotein reductase] + O2 = 18-hydroxy-9,10-epoxy-(12Z)-octadecenoate + oxidized [NADPH--hemoprotein reductase] + H2O + H(+). The catalysed reaction is 9,10-epoxyoctadecanoate + reduced [NADPH--hemoprotein reductase] + O2 = 18-hydroxy-9,10-epoxy-octadecanoate + oxidized [NADPH--hemoprotein reductase] + H2O + H(+). It carries out the reaction (12R)-hydroxy-(9Z)-octadecenoate + reduced [NADPH--hemoprotein reductase] + O2 = (12R),18-dihydroxy-(9Z)-octadecenoate + oxidized [NADPH--hemoprotein reductase] + H2O + H(+). The enzyme catalyses 12-hydroxyoctadecanoate + reduced [NADPH--hemoprotein reductase] + O2 = 12,18-dihydroxyoctadecanoate + oxidized [NADPH--hemoprotein reductase] + H2O + H(+). It catalyses the reaction 5-hydroxy-(6E,8Z,11Z,14Z)-eicosatetraenoate + reduced [NADPH--hemoprotein reductase] + O2 = 5,20-dihydroxy-(6E,8Z,11Z,14Z)-eicosatetraenoate + oxidized [NADPH--hemoprotein reductase] + H2O + H(+). The catalysed reaction is 8-hydroxy-(5Z,9E,11Z,14Z)-eicosatetraenoate + reduced [NADPH--hemoprotein reductase] + O2 = 8,20-dihydroxy-(5Z,9E,11Z,14Z)-eicosatetraenoate + oxidized [NADPH--hemoprotein reductase] + H2O + H(+). It carries out the reaction 12-hydroxy-(5Z,8Z,10E,14Z)-eicosatetraenoate + reduced [NADPH--hemoprotein reductase] + O2 = 12,20-dihydroxy-(5Z,8Z,10E,14Z)-eicosatetraenoate + oxidized [NADPH--hemoprotein reductase] + H2O + H(+). The enzyme catalyses 5-hydroxy-(6E,8Z,11Z,14Z,17Z)-eicosapentaenoate + reduced [NADPH--hemoprotein reductase] + O2 = 5,20-dihydroxy-(6E,8Z,11Z,14Z,17Z)-eicosapentaenoate + oxidized [NADPH--hemoprotein reductase] + H2O + H(+). It catalyses the reaction lipoxin A4 + reduced [NADPH--hemoprotein reductase] + O2 = 20-hydroxy-lipoxin A4 + oxidized [NADPH--hemoprotein reductase] + H2O + H(+). The catalysed reaction is lipoxin B4 + reduced [NADPH--hemoprotein reductase] + O2 = 20-hydroxy-lipoxin B4 + oxidized [NADPH--hemoprotein reductase] + H2O + H(+). It carries out the reaction 22-hydroxydocosanoate + reduced [NADPH--hemoprotein reductase] + O2 = 22-oxodocosanoate + oxidized [NADPH--hemoprotein reductase] + 2 H2O + H(+). The enzyme catalyses 22-oxodocosanoate + reduced [NADPH--hemoprotein reductase] + O2 = docosanedioate + oxidized [NADPH--hemoprotein reductase] + H2O + 2 H(+). It catalyses the reaction docosanoate + reduced [NADPH--hemoprotein reductase] + O2 = 22-hydroxydocosanoate + oxidized [NADPH--hemoprotein reductase] + H2O + H(+). The catalysed reaction is tetracosanoate + reduced [NADPH--hemoprotein reductase] + O2 = 24-hydroxytetracosanoate + oxidized [NADPH--hemoprotein reductase] + H2O + H(+). It carries out the reaction hexacosanoate + reduced [NADPH--hemoprotein reductase] + O2 = 26-hydroxyhexacosanoate + oxidized [NADPH--hemoprotein reductase] + H2O + H(+). The enzyme catalyses 26-hydroxyhexacosanoate + reduced [NADPH--hemoprotein reductase] + O2 = 26-oxohexacosanoate + oxidized [NADPH--hemoprotein reductase] + 2 H2O + H(+). It catalyses the reaction 26-oxohexacosanoate + reduced [NADPH--hemoprotein reductase] + O2 = hexacosanedioate + oxidized [NADPH--hemoprotein reductase] + H2O + 2 H(+). The catalysed reaction is 3-hydroxyoctadecanoate + reduced [NADPH--hemoprotein reductase] + O2 = 3,18-dihydroxyoctadecanoate + oxidized [NADPH--hemoprotein reductase] + H2O + H(+). It carries out the reaction 3-hydroxyhexadecanoate + reduced [NADPH--hemoprotein reductase] + O2 = 3,16-dihydroxyhexadecanoate + oxidized [NADPH--hemoprotein reductase] + H2O + H(+). Its pathway is lipid metabolism; leukotriene B4 degradation. The protein operates within lipid metabolism; arachidonate metabolism. Inhibited by carbon monoxide (CO). A cytochrome P450 monooxygenase involved in the metabolism of various endogenous substrates, including fatty acids and their oxygenated derivatives (oxylipins). Mechanistically, uses molecular oxygen inserting one oxygen atom into a substrate, and reducing the second into a water molecule, with two electrons provided by NADPH via cytochrome P450 reductase (CPR; NADPH-ferrihemoprotein reductase). May play a role in inactivation of pro-inflammatory and anti-inflammatory oxylipins during the resolution of inflammation. In terms of biological role, catalyzes predominantly the oxidation of the terminal carbon (omega-oxidation) of oxylipins in myeloid cells, displaying higher affinity for arachidonate metabolite leukotriene B4 (LTB4). Inactivates LTB4 via three successive oxidative transformations to 20-hydroxy-LTB4, then to 20-oxo-LTB4 and to 20-carboxy-LTB4. Has omega-hydroxylase activity toward long-chain fatty acid epoxides with preference for 8,9-epoxy-(5Z,11Z,14Z)-eicosatrienoate (EET) and 9,10-epoxyoctadecanoate. Omega-hydroxylates monohydroxy polyunsaturated fatty acids (PUFAs), including hydroxyeicosatetraenoates (HETEs) and hydroxyeicosapentaenoates (HEPEs), to dihydroxy compounds. Contributes to the degradation of saturated very long-chain fatty acids (VLCFAs) such as docosanoic acid, by catalyzing successive omega-oxidations to the corresponding dicarboxylic acid, thereby initiating chain shortening. Has low hydroxylase activity toward PUFAs. Its function is as follows. Catalyzes predominantly the oxidation of the terminal carbon (omega-oxidation) of polyunsaturated fatty acids (PUFAs). Participates in the conversion of arachidonic acid to 20-hydroxyeicosatetraenoic acid (20-HETE), a signaling molecule acting both as vasoconstrictive and natriuretic with overall effect on arterial blood pressure. Has high omega-hydroxylase activity toward other PUFAs, including eicosatrienoic acid (ETA), eicosapentaenoic acid (EPA) and docosahexaenoic acid (DHA). Can also catalyze the oxidation of the penultimate carbon (omega-1 oxidation) of PUFAs with lower efficiency. Contributes to the degradation of saturated very long-chain fatty acids (VLCFAs) such as docosanoic acid and hexacosanoic acid, by catalyzing successive omega-oxidations to the corresponding dicarboxylic acids, thereby initiating chain shortening. Omega-hydroxylates long-chain 3-hydroxy fatty acids, likely initiating the oxidative conversion to the corresponding 3-hydroxydicarboxylic fatty acids. Has omega-hydroxylase activity toward long-chain fatty acid epoxides with preference for 8,9-epoxy-(5Z,11Z,14Z)-eicosatrienoate (EET) and 9,10-epoxyoctadecanoate. This Homo sapiens (Human) protein is Cytochrome P450 4F3.